Consider the following 931-residue polypeptide: Valine--tRNA ligase (931 aa).

The 'HIGH' region motif lies at 43-53 (PNVTGALHIGH). A disordered region spans residues 351–370 (IPHTDKDGNAHDAEPRTIQT). The segment covering 353–365 (HTDKDGNAHDAEP) has biased composition (basic and acidic residues). The 'KMSKS' region motif lies at 552-556 (KMSKS). Residue lysine 555 participates in ATP binding. Residues 691-717 (LQGRGLGEGDEAVPAPADGPLSPALSP) are disordered. Positions 864 to 930 (VIDIAAERER…DRLSAALARL (67 aa)) form a coiled coil.

It belongs to the class-I aminoacyl-tRNA synthetase family. ValS type 1 subfamily. As to quaternary structure, monomer.

The protein localises to the cytoplasm. It carries out the reaction tRNA(Val) + L-valine + ATP = L-valyl-tRNA(Val) + AMP + diphosphate. Functionally, catalyzes the attachment of valine to tRNA(Val). As ValRS can inadvertently accommodate and process structurally similar amino acids such as threonine, to avoid such errors, it has a 'posttransfer' editing activity that hydrolyzes mischarged Thr-tRNA(Val) in a tRNA-dependent manner. The polypeptide is Valine--tRNA ligase (Sphingopyxis alaskensis (strain DSM 13593 / LMG 18877 / RB2256) (Sphingomonas alaskensis)).